A 120-amino-acid chain; its full sequence is Immunoglobulin lambda variable 4-60 (120 aa).

An N-terminal signal peptide occupies residues Met1–Ser21. The framework-1 stretch occupies residues Gln22–Ser46. The 98-residue stretch at Pro23–Thr120 folds into the Ig-like domain. An intrachain disulfide couples Cys43 to Cys113. The segment at Ser47 to Ile53 is complementarity-determining-1. The segment at Ile54–Lys70 is framework-2. Positions Leu71–Tyr77 are complementarity-determining-2. The framework-3 stretch occupies residues Asn78–Cys113. The complementarity-determining-3 stretch occupies residues Glu114 to Thr120.

As to quaternary structure, immunoglobulins are composed of two identical heavy chains and two identical light chains; disulfide-linked.

The protein resides in the secreted. Its subcellular location is the cell membrane. Functionally, v region of the variable domain of immunoglobulin light chains that participates in the antigen recognition. Immunoglobulins, also known as antibodies, are membrane-bound or secreted glycoproteins produced by B lymphocytes. In the recognition phase of humoral immunity, the membrane-bound immunoglobulins serve as receptors which, upon binding of a specific antigen, trigger the clonal expansion and differentiation of B lymphocytes into immunoglobulins-secreting plasma cells. Secreted immunoglobulins mediate the effector phase of humoral immunity, which results in the elimination of bound antigens. The antigen binding site is formed by the variable domain of one heavy chain, together with that of its associated light chain. Thus, each immunoglobulin has two antigen binding sites with remarkable affinity for a particular antigen. The variable domains are assembled by a process called V-(D)-J rearrangement and can then be subjected to somatic hypermutations which, after exposure to antigen and selection, allow affinity maturation for a particular antigen. The sequence is that of Immunoglobulin lambda variable 4-60 from Homo sapiens (Human).